The primary structure comprises 391 residues: NADH-quinone oxidoreductase subunit D (391 aa).

This sequence belongs to the complex I 49 kDa subunit family. NDH-1 is composed of 14 different subunits. Subunits NuoB, C, D, E, F, and G constitute the peripheral sector of the complex.

It is found in the cell inner membrane. The enzyme catalyses a quinone + NADH + 5 H(+)(in) = a quinol + NAD(+) + 4 H(+)(out). Functionally, NDH-1 shuttles electrons from NADH, via FMN and iron-sulfur (Fe-S) centers, to quinones in the respiratory chain. The immediate electron acceptor for the enzyme in this species is believed to be ubiquinone. Couples the redox reaction to proton translocation (for every two electrons transferred, four hydrogen ions are translocated across the cytoplasmic membrane), and thus conserves the redox energy in a proton gradient. This chain is NADH-quinone oxidoreductase subunit D, found in Rickettsia felis (strain ATCC VR-1525 / URRWXCal2) (Rickettsia azadi).